We begin with the raw amino-acid sequence, 480 residues long: Glutamate--tRNA ligase (480 aa).

Positions 21 to 31 (PSPTGYLHVGG) match the 'HIGH' region motif. Positions 110, 112, 137, and 139 each coordinate Zn(2+). A 'KMSKS' region motif is present at residues 248 to 252 (KLSKR). K251 is a binding site for ATP.

Belongs to the class-I aminoacyl-tRNA synthetase family. Glutamate--tRNA ligase type 1 subfamily. As to quaternary structure, monomer. Requires Zn(2+) as cofactor.

Its subcellular location is the cytoplasm. The catalysed reaction is tRNA(Glu) + L-glutamate + ATP = L-glutamyl-tRNA(Glu) + AMP + diphosphate. Its function is as follows. Catalyzes the attachment of glutamate to tRNA(Glu) in a two-step reaction: glutamate is first activated by ATP to form Glu-AMP and then transferred to the acceptor end of tRNA(Glu). This Actinobacillus succinogenes (strain ATCC 55618 / DSM 22257 / CCUG 43843 / 130Z) protein is Glutamate--tRNA ligase.